Consider the following 573-residue polypeptide: DEAD-box ATP-dependent RNA helicase 47B (573 aa).

The short motif at 131-159 (KSFEELGLPPLLIDRLNKEGLSTPTEVQS) is the Q motif element. The region spanning 162–362 (IPIISQKHDA…RSWGHDPVLV (201 aa)) is the Helicase ATP-binding domain. Position 175-182 (175-182 (SYTGSGKT)) interacts with ATP. The DEAD box motif lies at 293-296 (DEVD). The region spanning 421–565 (TLRRCIHALE…PCEFTEGKLL (145 aa)) is the Helicase C-terminal domain.

Belongs to the DEAD box helicase family.

The enzyme catalyses ATP + H2O = ADP + phosphate + H(+). This is DEAD-box ATP-dependent RNA helicase 47B from Oryza sativa subsp. japonica (Rice).